A 142-amino-acid polypeptide reads, in one-letter code: Large ribosomal subunit protein uL13 (142 aa).

This sequence belongs to the universal ribosomal protein uL13 family. In terms of assembly, part of the 50S ribosomal subunit.

This protein is one of the early assembly proteins of the 50S ribosomal subunit, although it is not seen to bind rRNA by itself. It is important during the early stages of 50S assembly. This chain is Large ribosomal subunit protein uL13, found in Opitutus terrae (strain DSM 11246 / JCM 15787 / PB90-1).